The following is a 953-amino-acid chain: Translation initiation factor IF-2 (953 aa).

2 disordered regions span residues 51 to 242 (SKAS…QEAK) and 279 to 363 (TKLK…TERK). 2 stretches are compositionally biased toward basic and acidic residues: residues 80 to 89 (TGSEHVEKTQ) and 98 to 111 (FKAE…EQAA). Positions 131–140 (QPNNHQTNEQ) are enriched in polar residues. Residues 149 to 188 (SQGDTNDKRIERKASNVSPRHDNHQLVGDRNRSFAKENHK) show a composition bias toward basic and acidic residues. Residues 191–207 (RFTNQKKQGRQEPQSKS) show a composition bias toward polar residues. The span at 229 to 242 (RQSETRFRAQQEAK) shows a compositional bias: basic and acidic residues. Polar residues predominate over residues 282–291 (KSSNISAKST). Basic and acidic residues predominate over residues 300–317 (ARPEKNRELTHHSQEGQK). The segment covering 322 to 338 (SWNSQNQVRNQKNSNWN) has biased composition (low complexity). Over residues 339–348 (KNKKTKKGKN) the composition is skewed to basic residues. A tr-type G domain is found at 454-623 (ERAPVVTIMG…LLVAEVEELK (170 aa)). Positions 463–470 (GHVDHGKT) are G1. GTP is bound at residue 463–470 (GHVDHGKT). A G2 region spans residues 488 to 492 (GITQH). Positions 509–512 (DTPG) are G3. Residues 509–513 (DTPGH) and 563–566 (NKID) contribute to the GTP site. The tract at residues 563-566 (NKID) is G4. The G5 stretch occupies residues 599–601 (SAK).

This sequence belongs to the TRAFAC class translation factor GTPase superfamily. Classic translation factor GTPase family. IF-2 subfamily.

The protein localises to the cytoplasm. In terms of biological role, one of the essential components for the initiation of protein synthesis. Protects formylmethionyl-tRNA from spontaneous hydrolysis and promotes its binding to the 30S ribosomal subunits. Also involved in the hydrolysis of GTP during the formation of the 70S ribosomal complex. This Streptococcus pyogenes serotype M49 (strain NZ131) protein is Translation initiation factor IF-2.